Here is a 732-residue protein sequence, read N- to C-terminus: Segment polarity protein dishevelled homolog DVL-2 (732 aa).

Residues 1–82 (MAETKVIYHL…RVVSWLVSSE (82 aa)) enclose the DIX domain. Disordered regions lie at residues 81–181 (SETS…SSST) and 195–237 (EEDD…SSFS). Over residues 98–111 (DPPPVPPPVPPPPA) the composition is skewed to pro residues. A compositionally biased stretch (basic and acidic residues) spans 146 to 157 (MRRDRVRRRDST). Over residues 202 to 213 (RFSSSTEQSSAS) the composition is skewed to polar residues. Residues 215 to 227 (LLKRHRRRRKQRP) show a composition bias toward basic residues. Residues 250–335 (TVTLNMEKYN…KPGPIILTVA (86 aa)) enclose the PDZ domain. Residues 424 to 498 (PESGLEVRDR…SEQCYYIFGD (75 aa)) form the DEP domain. Low complexity-rich tracts occupy residues 570–589 (MGSAGSQHSEGSRSSGSNRS), 612–629 (KSGSGSESEYSTRSSIRR), and 637–647 (PPSERSTSSRP). Residues 570 to 660 (MGSAGSQHSE…HPPSVHSYAA (91 aa)) are disordered.

Belongs to the DSH family. As to quaternary structure, can form homomultimers. Interacts with prickle1. Interacts (via the PDZ domain) with ccdc88c/dal and dact1-B/dpr. Interacts (via the DIX domain) with ARP/Axin-related protein and dact1-A/frodo. Interacts with sdc4, possibly via fz7. Interacts directly (via the DEP domain) with efnb1/ephrin-B1. May interact indirectly with the phosphorylated ephrin receptors ephb1 and ephb2 via SH domain-containing adapters. Phosphorylated. Phosphorylation is controlled by frizzled proteins, correlates with the onset of embryo dorsalizing events and is higher in the dorsal half of early cleavage embryos. Phosphorylated on tyrosine residues in response to association with efnb1/ephrin-B1.

It is found in the cytoplasm. The protein resides in the cytoplasmic vesicle. It localises to the cell projection. Its subcellular location is the cilium. The protein localises to the nucleus. It is found in the cell membrane. In terms of biological role, involved in at least 2 independent signaling cascades, controlling cell fate via canonical Wnt signaling and cell polarity via a planar cell polarity (PCP) cascade. Acts synergistically with dal/dapple-like to activate Wnt signaling, stabilizing ctnnb1/beta-catenin and leading to dorsal axis formation. Also prevents degradation of ctnnb1/beta-catenin by displacing gsk3 from a complex with ARP/Axin-related protein. Has an additional role in anterior-posterior (A/P) axis formation, specifying different neuroectodermal cell fates along the A/P axis in a dose-dependent manner by activating several early patterning genes. In the PCP pathway, required at the cell membrane for PCP-mediated neural and mesodermal convergent extension during gastrulation and subsequent neural tube closure, acting to activate jnk. Also involved in blastopore closure and archenteron elongation during early, but not late, gastrulation. Associates with ephrin receptors and ligands and acts as part of a downstream PCP pathway to mediate ephrin-mediated cell repulsion via activation of rhoa. Required for efnb1/ephrin-B1-driven movement of non-retinal progenitor cells into the retina during eye field formation. Patterns the hindbrain. Required for ciliogenesis. Controls the docking of basal bodies to the apical plasma membrane; mediates the activation, but not localization of rhoa at the apical surface of ciliated cells during basal body docking. Furthermore, required for the association of basal bodies with membrane-bound vesicles and the vesicle-trafficking protein exoc4/sec8, and this association is in turn required for basal body docking. Once basal bodies are docked, required for the planar polarization of basal bodies that underlies ciliary beating and the directional fluid flow across ciliated epithelia. This chain is Segment polarity protein dishevelled homolog DVL-2, found in Xenopus tropicalis (Western clawed frog).